Consider the following 845-residue polypeptide: MAMAMRLPAISRAVTEVASSPVGLRRLFCSNASRFSFLSPPARRQAEPSTNLFHSGLSKRITSERSLWNRIFSRNMGGGPRTFPGGLNKWQWKRMHEKKAREKENKLLDQEKQLYEARIRTEIRAKMWGHPDSGEKTAKLKQSHGPMSPKEHIKTLADRFMKAGADDLWNDNDGPVKKFDQGSRSCSDSIDSTPIDVRRLVSATCDSMGKHRVLDSSRRGFSSMSRFKRNESSCDEGDDVDAKKLDTLSPFSPKFSGTKEKVKSSTSVVGVIRNKGLFGRRKFRKNDSSTEEDSDEEGNEGKMIGWMDLRKTGSSASLGNHDIKLTKRVNRNVTDEELYPPLDINRVREDLSKKQSVDNVMEEKQEPHDSIYSAKRFDESCISPLTLKALSASGIVKMTRVQDATLSECLDGKDALVKAKTGTGKSMAFLLPAIETVLKAMNSGKGVHKVAPIFVLILCPTRELASQIAAEGKALLKNHDGIGVQTLIGGTRFRLDQQRLESEPCQILIATPGRLLDHIENKSGLTSRLMALKLFIVDEADLLLDLGFKRDVEKIIDCLPRQRQSLLFSATIPKEVRRVSQLVLKRDHSYIDTIGLGCVETHDKVKQSCIVAPHESHFHLVPHLLKEHINNMPDYKIIVFCSTGMVTSLMYTLLREMKLNVREIHARKPQLHRTCVSDEFKESNRLILVTSDVSARGMNYPDVTLVIQVGIPSDREQYIHRLGRTGREGKGGKGLLLIAPWERYFLDELKDLPLEPIPAPDLDSRVKHQVDQSMAKIDTSIKEAAYHAWLGYYNSVRETGRDKTTLAELANRFCHSIGLEKPPALFRRTAVKMGLKGISGIPIRK.

2 disordered regions span residues 129–149 (GHPDSGEKTAKLKQSHGPMSP) and 282–302 (KFRKNDSSTEEDSDEEGNEGK). Positions 289 to 298 (STEEDSDEEG) are enriched in acidic residues. The Q motif motif lies at 375–403 (KRFDESCISPLTLKALSASGIVKMTRVQD). The 185-residue stretch at 406–590 (LSECLDGKDA…QLVLKRDHSY (185 aa)) folds into the Helicase ATP-binding domain. 419–426 (AKTGTGKS) serves as a coordination point for ATP. Residues 538–541 (DEAD) carry the DEAD box motif. One can recognise a Helicase C-terminal domain in the interval 624-778 (LLKEHINNMP…QVDQSMAKID (155 aa)).

It belongs to the DEAD box helicase family.

It carries out the reaction ATP + H2O = ADP + phosphate + H(+). This Arabidopsis thaliana (Mouse-ear cress) protein is Putative DEAD-box ATP-dependent RNA helicase 33 (RH33).